A 476-amino-acid chain; its full sequence is Glycogen synthase (476 aa).

Lys15 serves as a coordination point for ADP-alpha-D-glucose.

The protein belongs to the glycosyltransferase 1 family. Bacterial/plant glycogen synthase subfamily.

The catalysed reaction is [(1-&gt;4)-alpha-D-glucosyl](n) + ADP-alpha-D-glucose = [(1-&gt;4)-alpha-D-glucosyl](n+1) + ADP + H(+). It functions in the pathway glycan biosynthesis; glycogen biosynthesis. In terms of biological role, synthesizes alpha-1,4-glucan chains using ADP-glucose. The chain is Glycogen synthase from Halalkalibacterium halodurans (strain ATCC BAA-125 / DSM 18197 / FERM 7344 / JCM 9153 / C-125) (Bacillus halodurans).